The chain runs to 363 residues: MNRAPLKRSRILRMALTGVSAVSEESESGNKPFLLRALQIALVVSLYWVTSISMVFLNKYLLDSPSLQLDTPIFVTFYQCLVTSLLCKGLSTLATCCPGMVDFPTLNLDLKVARSVLPLSVVFIGMITFNNLCLKYVGVPFYNVGRSLTTVFNVLLSYLLLKQTTSFYALLTCGVIIGGFWLGIDQEGAEGTLSLTGTIFGVLASLCVSLNAIYTKKVLPAVDHSIWRLTFYNNVNACVLFLPLMIVLGELRALLAFTHLSSAHFWLMMTLGGLFGFAIGYVTGLQIKFTSPLTHNVSGTAKACAQTVLAVLYYEEIKSFLWWTSNLMVLGGSSAYTWVRGWEMQKTQEDPSSKDGEKSAIRV.

8 helical membrane passes run 33–55 (FLLR…ISMV), 75–97 (VTFY…ATCC), 110–129 (LKVA…MITF), 139–161 (VPFY…YLLL), 166–184 (SFYA…WLGI), 194–213 (SLTG…LNAI), 226–248 (IWRL…MIVL), and 263–285 (AHFW…VTGL).

Belongs to the TPT transporter family. SLC35C subfamily.

It localises to the golgi apparatus membrane. The enzyme catalyses GMP(out) + GDP-beta-L-fucose(in) = GMP(in) + GDP-beta-L-fucose(out). In terms of biological role, antiporter specific for GDP-l-fucose and depending on the concomitant reverse transport of GMP. Involved in GDP-fucose import from the cytoplasm into the Golgi lumen. The polypeptide is GDP-fucose transporter 1 (Slc35c1) (Mus musculus (Mouse)).